The sequence spans 964 residues: Translation initiation factor IF-2 (964 aa).

The interval 35–353 (ASSTIEPPVV…RQKRNEYESM (319 aa)) is disordered. A compositionally biased stretch (low complexity) spans 64 to 108 (KPTPAKPAAKPGAPAPKPGTAQKPTAPTPGAVAAPKPGTAAAKPT). The span at 124 to 133 (PAKPTAPKPA) shows a compositional bias: pro residues. Positions 145-155 (AAKKAAEDKAT) are enriched in basic and acidic residues. The segment covering 166-178 (NAMPRPMAKPGPK) has biased composition (pro residues). Over residues 220–233 (PRPQGGQRSGAPRD) the composition is skewed to low complexity. Composition is skewed to gly residues over residues 234 to 252 (GQGGPRGQRPGPGSGGPRP) and 290 to 333 (GKGG…GRPG). The segment covering 337–346 (RRGRKSKRQK) has biased composition (basic residues). The region spanning 459-631 (KRPPVVTVMG…VCLTADAELD (173 aa)) is the tr-type G domain. The interval 468 to 475 (GHVDHGKT) is G1. Position 468-475 (468-475 (GHVDHGKT)) interacts with GTP. Residues 493-497 (GITQG) form a G2 region. The tract at residues 518 to 521 (DTPG) is G3. GTP contacts are provided by residues 518-522 (DTPGH) and 572-575 (NKID). A G4 region spans residues 572–575 (NKID). The interval 608-610 (SAK) is G5.

It belongs to the TRAFAC class translation factor GTPase superfamily. Classic translation factor GTPase family. IF-2 subfamily.

The protein localises to the cytoplasm. Functionally, one of the essential components for the initiation of protein synthesis. Protects formylmethionyl-tRNA from spontaneous hydrolysis and promotes its binding to the 30S ribosomal subunits. Also involved in the hydrolysis of GTP during the formation of the 70S ribosomal complex. This chain is Translation initiation factor IF-2, found in Corynebacterium efficiens (strain DSM 44549 / YS-314 / AJ 12310 / JCM 11189 / NBRC 100395).